A 62-amino-acid chain; its full sequence is Small ribosomal subunit protein eS27 (62 aa).

Positions 17, 20, 36, and 39 each coordinate Zn(2+). The C4-type zinc finger occupies 17 to 39 (CPDCENEQLVFEKATSVVECTVC).

Belongs to the eukaryotic ribosomal protein eS27 family. Part of the 30S ribosomal subunit. The cofactor is Zn(2+).

This Methanocorpusculum labreanum (strain ATCC 43576 / DSM 4855 / Z) protein is Small ribosomal subunit protein eS27.